The chain runs to 330 residues: D-lactate dehydrogenase (330 aa).

NAD(+)-binding positions include 155 to 156 (RI), Asp175, 206 to 207 (MP), Asn212, 233 to 235 (MAR), and Asp259. Arg235 is an active-site residue. Residue Glu264 is part of the active site. The active-site Proton donor is the His296.

The protein belongs to the D-isomer specific 2-hydroxyacid dehydrogenase family.

It catalyses the reaction (R)-lactate + NAD(+) = pyruvate + NADH + H(+). This chain is D-lactate dehydrogenase (ldhD), found in Streptococcus agalactiae serotype V (strain ATCC BAA-611 / 2603 V/R).